The following is a 46-amino-acid chain: U1-plectoxin-Pt1f (46 aa).

Intrachain disulfides connect Cys4-Cys18, Cys11-Cys24, Cys17-Cys35, Cys21-Cys44, and Cys26-Cys33.

Belongs to the neurotoxin 02 (plectoxin) family. 02 (plectoxin) subfamily. In terms of tissue distribution, expressed by the venom gland.

It localises to the secreted. Potent toxin that may paralyze and/or kill insect pests such as H.virescens (lepidoptera), S.exigua (beet armyworm) and M.sexta (tobacco hornworm). This is U1-plectoxin-Pt1f from Plectreurys tristis (Spider).